The sequence spans 335 residues: Mycobacterial beta-ketoacyl-[acyl-carrier-protein] synthase III (335 aa).

Active-site residues include cysteine 122 and histidine 258. The tract at residues 259 to 263 is ACP-binding; the sequence is QANSR. Residue asparagine 289 is part of the active site.

This sequence belongs to the thiolase-like superfamily. FabH family. As to quaternary structure, homodimer.

It is found in the cytoplasm. It catalyses the reaction malonyl-[ACP] + dodecanoyl-CoA + H(+) = 3-oxotetradecanoyl-[ACP] + CO2 + CoA. It functions in the pathway lipid metabolism; fatty acid biosynthesis. Its pathway is lipid metabolism; mycolic acid biosynthesis. Catalyzes the condensation reaction of fatty acid synthesis by the addition to an acyl acceptor of two carbons from malonyl-ACP. Catalyzes the first condensation reaction which initiates fatty acid synthesis and may therefore play a role in governing the total rate of fatty acid production. Possesses both acetoacetyl-ACP synthase and acetyl transacylase activities. Its substrate specificity determines the biosynthesis of branched-chain and/or straight-chain of fatty acids. The sequence is that of Mycobacterial beta-ketoacyl-[acyl-carrier-protein] synthase III from Mycobacterium bovis (strain ATCC BAA-935 / AF2122/97).